Consider the following 206-residue polypeptide: uncharacterized protein (206 aa).

The signal sequence occupies residues 1–17 (MKGKILFALFLSAGVIA). A lipid anchor (N-palmitoyl cysteine) is attached at Cys-18. Cys-18 carries the S-diacylglycerol cysteine lipid modification. Positions 21 to 58 (ASQAAKQQEVKVAKAETKTKKKESKAEKFRKALAAQDK) form a coiled coil. The Cytochrome c domain occupies 97-201 (GDWRKGESLA…DIVAYLHDPE (105 aa)). Heme c contacts are provided by Cys-127, Cys-130, and His-131.

The protein localises to the cell membrane. This is an uncharacterized protein from Aquifex aeolicus (strain VF5).